We begin with the raw amino-acid sequence, 416 residues long: Squamosa promoter-binding-like protein 8 (416 aa).

The interval 11-51 (SSCDDFGYNATPPPPPSLLPIMDQDGGGGSIQRDHHQHHNH) is disordered. The SBP-type zinc finger occupies 182–260 (PPRCQAEGCK…ADHNRRRRKS (79 aa)). Residues C185, C190, C207, H210, C227, C230, H234, and C246 each coordinate Zn(2+). A Bipartite nuclear localization signal motif is present at residues 243–259 (KKSCRKRLADHNRRRRK). Residues 250–299 (LADHNRRRRKSKPSDGEHSGEKRRAQANKSAATKDKAGSSSKNAGIGDGF) form a disordered region. Over residues 261-273 (KPSDGEHSGEKRR) the composition is skewed to basic and acidic residues.

Expressed in stems, leaf sheaths, and young panicles. Weakly expressed in ligules, auricles, and leaf sheaths at the basal region.

Its subcellular location is the nucleus. Probable transcription factor that plays an important role in building the laminar joint between leaf blade and leaf sheath boundary, thereby controlling ligule and auricle development. This chain is Squamosa promoter-binding-like protein 8 (SPL8), found in Oryza sativa subsp. japonica (Rice).